A 206-amino-acid polypeptide reads, in one-letter code: Glycerol-3-phosphate acyltransferase (206 aa).

5 helical membrane-spanning segments follow: residues 14–34 (IALAAAVIGYLLGSIPFGLIL), 67–87 (ATLLLDALKASAAAWIVGYFL), 91–111 (AAIIAGFFAFIGHLFPVWIGF), 124–144 (LLGVAPIMVVLFAAVWLAVAV), and 148–168 (YSSLSALVAMLVIPVALLILG).

The protein belongs to the PlsY family. In terms of assembly, probably interacts with PlsX.

The protein resides in the cell inner membrane. The enzyme catalyses an acyl phosphate + sn-glycerol 3-phosphate = a 1-acyl-sn-glycero-3-phosphate + phosphate. It participates in lipid metabolism; phospholipid metabolism. Catalyzes the transfer of an acyl group from acyl-phosphate (acyl-PO(4)) to glycerol-3-phosphate (G3P) to form lysophosphatidic acid (LPA). This enzyme utilizes acyl-phosphate as fatty acyl donor, but not acyl-CoA or acyl-ACP. The chain is Glycerol-3-phosphate acyltransferase from Rhizobium etli (strain ATCC 51251 / DSM 11541 / JCM 21823 / NBRC 15573 / CFN 42).